The following is a 193-amino-acid chain: Putative manganese efflux pump MntP (193 aa).

6 helical membrane passes run 3 to 23, 39 to 59, 65 to 85, 113 to 133, 138 to 158, and 173 to 193; these read LATLTVLGFSLSADAFAAALG, VGAYFGAFEAAAPLIGWALGL, IAAFDHWVAFTLLAGVGGHMV, LALAALATSIDATAVGIGLAV, ILMACALIGAITTVVAAGGVL, and VLGGLALIGIGLKILIEHLSA.

It belongs to the MntP (TC 9.B.29) family.

The protein resides in the cell inner membrane. Its function is as follows. Probably functions as a manganese efflux pump. In Rhodospirillum rubrum (strain ATCC 11170 / ATH 1.1.1 / DSM 467 / LMG 4362 / NCIMB 8255 / S1), this protein is Putative manganese efflux pump MntP.